The chain runs to 208 residues: Guanylate kinase (208 aa).

Positions 3–181 constitute a Guanylate kinase-like domain; the sequence is GSLFIITAAS…ALTELKAIIV (179 aa). Residue 10–17 participates in ATP binding; that stretch reads AASGTGKT.

Belongs to the guanylate kinase family.

The protein resides in the cytoplasm. The enzyme catalyses GMP + ATP = GDP + ADP. Its function is as follows. Essential for recycling GMP and indirectly, cGMP. In Psychrobacter arcticus (strain DSM 17307 / VKM B-2377 / 273-4), this protein is Guanylate kinase.